We begin with the raw amino-acid sequence, 63 residues long: uncharacterized protein (63 aa).

The signal sequence occupies residues 1-21 (MYLSLLLILLAWTLWLGNSLA).

This is an uncharacterized protein from Haemophilus influenzae (strain ATCC 51907 / DSM 11121 / KW20 / Rd).